The following is a 310-amino-acid chain: Methionyl-tRNA formyltransferase (310 aa).

109–112 (SLLP) is a binding site for (6S)-5,6,7,8-tetrahydrofolate.

This sequence belongs to the Fmt family.

It catalyses the reaction L-methionyl-tRNA(fMet) + (6R)-10-formyltetrahydrofolate = N-formyl-L-methionyl-tRNA(fMet) + (6S)-5,6,7,8-tetrahydrofolate + H(+). In terms of biological role, attaches a formyl group to the free amino group of methionyl-tRNA(fMet). The formyl group appears to play a dual role in the initiator identity of N-formylmethionyl-tRNA by promoting its recognition by IF2 and preventing the misappropriation of this tRNA by the elongation apparatus. This Pseudomonas entomophila (strain L48) protein is Methionyl-tRNA formyltransferase.